The primary structure comprises 155 residues: 6,7-dimethyl-8-ribityllumazine synthase (155 aa).

5-amino-6-(D-ribitylamino)uracil is bound by residues Phe-24, 58 to 60, and 82 to 84; these read AFE and AII. 87–88 serves as a coordination point for (2S)-2-hydroxy-3-oxobutyl phosphate; sequence ST. His-90 serves as the catalytic Proton donor. Phe-115 lines the 5-amino-6-(D-ribitylamino)uracil pocket. Arg-129 is a (2S)-2-hydroxy-3-oxobutyl phosphate binding site.

Belongs to the DMRL synthase family.

The enzyme catalyses (2S)-2-hydroxy-3-oxobutyl phosphate + 5-amino-6-(D-ribitylamino)uracil = 6,7-dimethyl-8-(1-D-ribityl)lumazine + phosphate + 2 H2O + H(+). The protein operates within cofactor biosynthesis; riboflavin biosynthesis; riboflavin from 2-hydroxy-3-oxobutyl phosphate and 5-amino-6-(D-ribitylamino)uracil: step 1/2. Functionally, catalyzes the formation of 6,7-dimethyl-8-ribityllumazine by condensation of 5-amino-6-(D-ribitylamino)uracil with 3,4-dihydroxy-2-butanone 4-phosphate. This is the penultimate step in the biosynthesis of riboflavin. This is 6,7-dimethyl-8-ribityllumazine synthase from Chlorobium luteolum (strain DSM 273 / BCRC 81028 / 2530) (Pelodictyon luteolum).